A 226-amino-acid polypeptide reads, in one-letter code: MNPIVINKLQRKLGYTFTHQELLQQALTHRSASSKHNERLEFLGDSILSYVIANALYQRFPRVDEGDMSRMRATLVRGNTLAEMAREFDLGECLRLGPGELKSGGYRRESILADTVEALIGGVFLDSDIQAVEQLILSWYASRLDQISPGDKQKDPKTRLQEFLQGRHLPLPSYLVVQVRGEAHDQEFTIHCQVSGMAEPVVGTGSSRRKAEQAAAEQALIKLGIE.

One can recognise an RNase III domain in the interval 6–128 (INKLQRKLGY…LIGGVFLDSD (123 aa)). Glutamate 41 contacts Mg(2+). Residue aspartate 45 is part of the active site. Mg(2+) contacts are provided by aspartate 114 and glutamate 117. Glutamate 117 is a catalytic residue. Residues 155–225 (DPKTRLQEFL…AEQALIKLGI (71 aa)) enclose the DRBM domain.

It belongs to the ribonuclease III family. As to quaternary structure, homodimer. Mg(2+) is required as a cofactor.

It localises to the cytoplasm. It catalyses the reaction Endonucleolytic cleavage to 5'-phosphomonoester.. Its function is as follows. Digests double-stranded RNA. Involved in the processing of primary rRNA transcript to yield the immediate precursors to the large and small rRNAs (23S and 16S). Processes some mRNAs, and tRNAs when they are encoded in the rRNA operon. Processes pre-crRNA and tracrRNA of type II CRISPR loci if present in the organism. The chain is Ribonuclease 3 from Erwinia tasmaniensis (strain DSM 17950 / CFBP 7177 / CIP 109463 / NCPPB 4357 / Et1/99).